We begin with the raw amino-acid sequence, 259 residues long: Dihydroorotate dehydrogenase B (NAD(+)), electron transfer subunit (259 aa).

Residues 2 to 102 enclose the FAD-binding FR-type domain; sequence MQKQNMIVVN…LGPLGHGFPV (101 aa). Residues 53–56, 70–72, and 77–78 contribute to the FAD site; these read RPIS, LYR, and GT. [2Fe-2S] cluster is bound by residues Cys221, Cys226, Cys229, and Cys246.

The protein belongs to the PyrK family. In terms of assembly, heterotetramer of 2 PyrK and 2 PyrD type B subunits. [2Fe-2S] cluster serves as cofactor. It depends on FAD as a cofactor.

Its pathway is pyrimidine metabolism; UMP biosynthesis via de novo pathway; orotate from (S)-dihydroorotate (NAD(+) route): step 1/1. Functionally, responsible for channeling the electrons from the oxidation of dihydroorotate from the FMN redox center in the PyrD type B subunit to the ultimate electron acceptor NAD(+). The polypeptide is Dihydroorotate dehydrogenase B (NAD(+)), electron transfer subunit (Bacillus cereus (strain G9842)).